Reading from the N-terminus, the 108-residue chain is Large ribosomal subunit protein uL24 (108 aa).

Belongs to the universal ribosomal protein uL24 family. Part of the 50S ribosomal subunit.

Functionally, one of two assembly initiator proteins, it binds directly to the 5'-end of the 23S rRNA, where it nucleates assembly of the 50S subunit. In terms of biological role, one of the proteins that surrounds the polypeptide exit tunnel on the outside of the subunit. The sequence is that of Large ribosomal subunit protein uL24 from Mycoplasma capricolum subsp. capricolum (strain California kid / ATCC 27343 / NCTC 10154).